The sequence spans 343 residues: Holliday junction branch migration complex subunit RuvB (343 aa).

A disordered region spans residues 1–26 (MKEKILTFSSDPSSPVTRHETEEDTG). The interval 3–193 (EKILTFSSDP…FGIFRKFDFY (191 aa)) is large ATPase domain (RuvB-L). The span at 7–16 (TFSSDPSSPV) shows a compositional bias: polar residues. ATP contacts are provided by residues Leu-32, Arg-33, Gly-74, Lys-77, Thr-78, Thr-79, 140–142 (EDF), Arg-183, Tyr-193, and Arg-230. Residue Thr-78 participates in Mg(2+) binding. The tract at residues 194–264 (SRQDLARIVS…AIDDALALEG (71 aa)) is small ATPAse domain (RuvB-S). Residues 267-343 (EKGLTGLDRS…YRHLGVQWRG (77 aa)) are head domain (RuvB-H). 2 residues coordinate DNA: Arg-322 and Arg-327.

This sequence belongs to the RuvB family. In terms of assembly, homohexamer. Forms an RuvA(8)-RuvB(12)-Holliday junction (HJ) complex. HJ DNA is sandwiched between 2 RuvA tetramers; dsDNA enters through RuvA and exits via RuvB. An RuvB hexamer assembles on each DNA strand where it exits the tetramer. Each RuvB hexamer is contacted by two RuvA subunits (via domain III) on 2 adjacent RuvB subunits; this complex drives branch migration. In the full resolvosome a probable DNA-RuvA(4)-RuvB(12)-RuvC(2) complex forms which resolves the HJ.

It localises to the cytoplasm. It catalyses the reaction ATP + H2O = ADP + phosphate + H(+). In terms of biological role, the RuvA-RuvB-RuvC complex processes Holliday junction (HJ) DNA during genetic recombination and DNA repair, while the RuvA-RuvB complex plays an important role in the rescue of blocked DNA replication forks via replication fork reversal (RFR). RuvA specifically binds to HJ cruciform DNA, conferring on it an open structure. The RuvB hexamer acts as an ATP-dependent pump, pulling dsDNA into and through the RuvAB complex. RuvB forms 2 homohexamers on either side of HJ DNA bound by 1 or 2 RuvA tetramers; 4 subunits per hexamer contact DNA at a time. Coordinated motions by a converter formed by DNA-disengaged RuvB subunits stimulates ATP hydrolysis and nucleotide exchange. Immobilization of the converter enables RuvB to convert the ATP-contained energy into a lever motion, pulling 2 nucleotides of DNA out of the RuvA tetramer per ATP hydrolyzed, thus driving DNA branch migration. The RuvB motors rotate together with the DNA substrate, which together with the progressing nucleotide cycle form the mechanistic basis for DNA recombination by continuous HJ branch migration. Branch migration allows RuvC to scan DNA until it finds its consensus sequence, where it cleaves and resolves cruciform DNA. The chain is Holliday junction branch migration complex subunit RuvB from Desulfosudis oleivorans (strain DSM 6200 / JCM 39069 / Hxd3) (Desulfococcus oleovorans).